A 446-amino-acid polypeptide reads, in one-letter code: Tubulin gamma chain (446 aa).

142 to 148 (AGGTGSG) provides a ligand contact to GTP.

The protein belongs to the tubulin family.

It is found in the cytoplasm. It localises to the cytoskeleton. The protein resides in the microtubule organizing center. Its subcellular location is the spindle pole body. In terms of biological role, tubulin is the major constituent of microtubules. The gamma chain is found at microtubule organizing centers (MTOC) such as the spindle poles or the centrosome, suggesting that it is involved in the minus-end nucleation of microtubule assembly. This is Tubulin gamma chain (tug1) from Schizosaccharomyces japonicus (Fission yeast).